Consider the following 345-residue polypeptide: Anthranilate phosphoribosyltransferase (345 aa).

5-phospho-alpha-D-ribose 1-diphosphate-binding positions include Gly-79, 82-83 (GD), Thr-87, 89-92 (NVST), 106-114 (KHGNRAVSG), and Ser-118. Gly-79 provides a ligand contact to anthranilate. Ser-91 lines the Mg(2+) pocket. Asn-109 serves as a coordination point for anthranilate. Arg-164 serves as a coordination point for anthranilate. Residues Asp-223 and Glu-224 each contribute to the Mg(2+) site.

Belongs to the anthranilate phosphoribosyltransferase family. Homodimer. It depends on Mg(2+) as a cofactor.

The catalysed reaction is N-(5-phospho-beta-D-ribosyl)anthranilate + diphosphate = 5-phospho-alpha-D-ribose 1-diphosphate + anthranilate. It functions in the pathway amino-acid biosynthesis; L-tryptophan biosynthesis; L-tryptophan from chorismate: step 2/5. Catalyzes the transfer of the phosphoribosyl group of 5-phosphorylribose-1-pyrophosphate (PRPP) to anthranilate to yield N-(5'-phosphoribosyl)-anthranilate (PRA). In Saccharolobus islandicus (strain L.S.2.15 / Lassen #1) (Sulfolobus islandicus), this protein is Anthranilate phosphoribosyltransferase.